We begin with the raw amino-acid sequence, 539 residues long: Aluminum-activated malate transporter 13 (539 aa).

Transmembrane regions (helical) follow at residues 57 to 77 (VGVA…FEGV), 80 to 100 (NALW…GATL), 107 to 127 (GLGT…AIHS), 130 to 150 (ILGG…ITYM), 165 to 185 (LVFL…DTVI), and 192 to 212 (LYTI…FFPI).

It belongs to the aromatic acid exporter (TC 2.A.85) family.

Its subcellular location is the membrane. Its function is as follows. Malate transporter. The sequence is that of Aluminum-activated malate transporter 13 (ALMT13) from Arabidopsis thaliana (Mouse-ear cress).